Consider the following 478-residue polypeptide: Sugar transporter ERD6-like 15 (478 aa).

The next 12 membrane-spanning stretches (helical) occupy residues F31–Y51, I67–I87, I106–L126, L129–I149, F161–A181, L185–E205, A267–G287, F305–V325, L333–F353, V366–I386, M406–L426, and G432–V452.

This sequence belongs to the major facilitator superfamily. Sugar transporter (TC 2.A.1.1) family.

It is found in the membrane. Functionally, sugar transporter. In Arabidopsis thaliana (Mouse-ear cress), this protein is Sugar transporter ERD6-like 15.